A 271-amino-acid polypeptide reads, in one-letter code: Phosphate import ATP-binding protein PstB (271 aa).

Residues 25–266 (FDTKNLNLWY…PSDKRTEDYI (242 aa)) form the ABC transporter domain. 57–64 (GPSGCGKS) serves as a coordination point for ATP.

This sequence belongs to the ABC transporter superfamily. Phosphate importer (TC 3.A.1.7) family. As to quaternary structure, the complex is composed of two ATP-binding proteins (PstB), two transmembrane proteins (PstC and PstA) and a solute-binding protein (PstS).

The protein resides in the cell membrane. The enzyme catalyses phosphate(out) + ATP + H2O = ADP + 2 phosphate(in) + H(+). In terms of biological role, part of the ABC transporter complex PstSACB involved in phosphate import. Responsible for energy coupling to the transport system. The chain is Phosphate import ATP-binding protein PstB from Bacillus anthracis.